Consider the following 480-residue polypeptide: Proline--tRNA ligase (480 aa).

The protein belongs to the class-II aminoacyl-tRNA synthetase family. ProS type 3 subfamily. Homodimer.

The protein resides in the cytoplasm. It catalyses the reaction tRNA(Pro) + L-proline + ATP = L-prolyl-tRNA(Pro) + AMP + diphosphate. In terms of biological role, catalyzes the attachment of proline to tRNA(Pro) in a two-step reaction: proline is first activated by ATP to form Pro-AMP and then transferred to the acceptor end of tRNA(Pro). In Chloroflexus aggregans (strain MD-66 / DSM 9485), this protein is Proline--tRNA ligase.